The sequence spans 108 residues: uncharacterized protein (108 aa).

The disordered stretch occupies residues 1–108; the sequence is MAKVTSEPQK…DKEQSETSVL (108 aa). Residues 26–56 are compositionally biased toward basic residues; the sequence is KGRKKGKTPRQRRSRSGVKGLKTTRKAKRPL. Polar residues predominate over residues 58 to 70; it reads GSSSQKAGETNTP. The span at 73–92 shows a compositional bias: basic residues; it reads KPKKARGPILRGRYHRLKEK. Positions 93-108 are enriched in basic and acidic residues; sequence MKKEEADKEQSETSVL.

This is an uncharacterized protein from Homo sapiens (Human).